A 270-amino-acid chain; its full sequence is Phosphatidylinositol transfer protein alpha isoform (270 aa).

Residues Thr-58, Lys-60, Glu-85, Asn-89, Thr-96, and Lys-194 each coordinate a 1,2-diacyl-sn-glycero-3-phospho-(1D-myo-inositol). Lys-215 is subject to N6-acetyllysine. Basic and acidic residues predominate over residues 250–263 (TKRQLDEMRQKDPV). Residues 250–270 (TKRQLDEMRQKDPVKGMTADD) are disordered.

It belongs to the PtdIns transfer protein family. PI transfer class I subfamily.

Its subcellular location is the cytoplasm. The protein resides in the nucleus. It catalyses the reaction a 1,2-diacyl-sn-glycero-3-phosphocholine(in) = a 1,2-diacyl-sn-glycero-3-phosphocholine(out). The enzyme catalyses a 1,2-diacyl-sn-glycero-3-phospho-(1D-myo-inositol)(in) = a 1,2-diacyl-sn-glycero-3-phospho-(1D-myo-inositol)(out). With respect to regulation, phosphatidylinositol transfer activity is inhibited by N-ethylmaleimide. Functionally, catalyzes the transfer of phosphatidylinositol (PI) and phosphatidylcholine (PC) between membranes. Shows a preference for PI and PC containing shorter saturated or monosaturated acyl chains at the sn-1 and sn-2 positions. Preference order for PC is C16:1 &gt; C16:0 &gt; C18:1 &gt; C18:0 &gt; C20:4 and for PI is C16:1 &gt; C16:0 &gt; C18:1 &gt; C18:0 &gt; C20:4 &gt; C20:3. In Homo sapiens (Human), this protein is Phosphatidylinositol transfer protein alpha isoform (PITPNA).